Consider the following 474-residue polypeptide: MAYIQLEPINEGFLSKISDLLLCRWTCRNCCQKCYECSCCQSSEDEVEILGPFPAQTPPWLVSNRSEDKEGDSDNTTSEPPATPQDTSPDRRRSSSDTSRSTYSLTRRISSLESRRPSSPLIDIKPIEFGALGAKKEIVQPTVLRKSYTPEDYFRKFEPRLYSLDSSNDDVDSLTDDEILTKYQLGMLHFSTQYDLLHNYLNVRVIEARDLPPPISYDGSRQDMAHSNPYVKICLLPDQKNSKQTGVKRKTQNPVFEERYTFEIQFLEAQRRTLLLTIVDFDKFSRHCVIGKVAMPLNEVDLVKGGHWWKAIIPSSQNEVELGELLLSLNYLPSAGRLNVDIIRAKQLLQTDMSQGSDPFVKIQLVHGLKLAKTKKTSCMRGTIDPFYNESFSFKVPQEELENVSLVFTVYGHNMKTSNDFIGRIVIGQYASGSPESNHWRRMLNSNRTAVEQWHSLRSRAECDRVSPASLEVT.

A disordered region spans residues proline 54–leucine 112. Positions serine 96–leucine 112 are enriched in low complexity. C2 domains are found at residues glutamine 184–lysine 310 and glutamate 321–histidine 455.

It belongs to the synaptotagmin family.

It localises to the membrane. Functionally, may play a role in dendrite formation by melanocytes. This is Synaptotagmin-17 (syt17) from Xenopus tropicalis (Western clawed frog).